Reading from the N-terminus, the 37-residue chain is Cytochrome b6-f complex subunit 5 (37 aa).

The chain crosses the membrane as a helical span at residues 5 to 25; that stretch reads LLSGIVLGLMPVTLAGLFTTA.

This sequence belongs to the PetG family. The 4 large subunits of the cytochrome b6-f complex are cytochrome b6, subunit IV (17 kDa polypeptide, PetD), cytochrome f and the Rieske protein, while the 4 small subunits are PetG, PetL, PetM and PetN. The complex functions as a dimer.

The protein localises to the plastid. It is found in the chloroplast thylakoid membrane. Its function is as follows. Component of the cytochrome b6-f complex, which mediates electron transfer between photosystem II (PSII) and photosystem I (PSI), cyclic electron flow around PSI, and state transitions. PetG is required for either the stability or assembly of the cytochrome b6-f complex. The sequence is that of Cytochrome b6-f complex subunit 5 from Ostreococcus tauri.